The following is a 382-amino-acid chain: Galactokinase (382 aa).

Residue E34–D37 participates in substrate binding. An ATP-binding site is contributed by G124–S130. Residues S130 and E162 each coordinate Mg(2+). Residue D174 is the Proton acceptor of the active site. Residue Y223 participates in substrate binding.

It belongs to the GHMP kinase family. GalK subfamily.

It is found in the cytoplasm. The catalysed reaction is alpha-D-galactose + ATP = alpha-D-galactose 1-phosphate + ADP + H(+). Its pathway is carbohydrate metabolism; galactose metabolism. Functionally, catalyzes the transfer of the gamma-phosphate of ATP to D-galactose to form alpha-D-galactose-1-phosphate (Gal-1-P). This Escherichia coli O7:K1 (strain IAI39 / ExPEC) protein is Galactokinase.